The primary structure comprises 380 residues: Cytochrome b (380 aa).

The next 4 membrane-spanning stretches (helical) occupy residues 34-54 (FGSL…FLAM), 78-99 (WLLR…YMHI), 114-134 (WNIG…GYVL), and 179-199 (FFAF…VHLL). Residues His-84 and His-98 each coordinate heme b. The heme b site is built by His-183 and His-197. His-202 is an a ubiquinone binding site. 4 consecutive transmembrane segments (helical) span residues 227 to 247 (YKDV…ALFS), 289 to 309 (LGGV…PFVH), 321 to 341 (LAQV…WLGG), and 348 to 368 (YIFL…LLIP).

It belongs to the cytochrome b family. In terms of assembly, the cytochrome bc1 complex contains 3 respiratory subunits (MT-CYB, CYC1 and UQCRFS1), 2 core proteins (UQCRC1 and UQCRC2) and probably 6 low-molecular weight proteins. Requires heme b as cofactor.

It is found in the mitochondrion inner membrane. Component of the ubiquinol-cytochrome c reductase complex (complex III or cytochrome b-c1 complex) that is part of the mitochondrial respiratory chain. The b-c1 complex mediates electron transfer from ubiquinol to cytochrome c. Contributes to the generation of a proton gradient across the mitochondrial membrane that is then used for ATP synthesis. The sequence is that of Cytochrome b (MT-CYB) from Branchiostoma floridae (Florida lancelet).